Here is a 62-residue protein sequence, read N- to C-terminus: MTIAFQLAVFALIVTSSILLISVPVVFASPDGWSSNKNVVFSGTSLWIGLVFLVGILNSLIS.

The next 2 membrane-spanning stretches (helical) occupy residues 8 to 28 (AVFA…VVFA) and 41 to 61 (FSGT…NSLI).

Belongs to the PsbZ family. As to quaternary structure, PSII is composed of 1 copy each of membrane proteins PsbA, PsbB, PsbC, PsbD, PsbE, PsbF, PsbH, PsbI, PsbJ, PsbK, PsbL, PsbM, PsbT, PsbY, PsbZ, Psb30/Ycf12, at least 3 peripheral proteins of the oxygen-evolving complex and a large number of cofactors. It forms dimeric complexes.

It is found in the plastid. It localises to the chloroplast thylakoid membrane. May control the interaction of photosystem II (PSII) cores with the light-harvesting antenna, regulates electron flow through the 2 photosystem reaction centers. PSII is a light-driven water plastoquinone oxidoreductase, using light energy to abstract electrons from H(2)O, generating a proton gradient subsequently used for ATP formation. The protein is Photosystem II reaction center protein Z of Pisum sativum (Garden pea).